Here is a 401-residue protein sequence, read N- to C-terminus: Acetate kinase (401 aa).

Asparagine 7 lines the Mg(2+) pocket. Residue lysine 14 coordinates ATP. Arginine 91 is a binding site for substrate. Catalysis depends on aspartate 148, which acts as the Proton donor/acceptor. ATP-binding positions include 208–212, 283–285, and 331–335; these read HLGNG, DFR, and GVGEN. Glutamate 384 is a binding site for Mg(2+).

This sequence belongs to the acetokinase family. Homodimer. Requires Mg(2+) as cofactor. The cofactor is Mn(2+).

Its subcellular location is the cytoplasm. The catalysed reaction is acetate + ATP = acetyl phosphate + ADP. The protein operates within metabolic intermediate biosynthesis; acetyl-CoA biosynthesis; acetyl-CoA from acetate: step 1/2. Its function is as follows. Catalyzes the formation of acetyl phosphate from acetate and ATP. Can also catalyze the reverse reaction. The protein is Acetate kinase of Helicobacter hepaticus (strain ATCC 51449 / 3B1).